Here is a 376-residue protein sequence, read N- to C-terminus: Na(+)/H(+) antiporter NhaA (376 aa).

11 helical membrane-spanning segments follow: residues 8-28 (FLATEAAGGIILIAAAAAAML), 49-69 (LSLLHWINDALMALFFLLVGL), 87-107 (ILPCIAAAAGMAAPALLYLAF), 117-137 (GWAIPTATDIAFAIGVLALLG), 140-160 (APASLKLFLTTIAIVDDMGAV), 162-182 (IIALAYTAAISGPALLAAIVI), 209-229 (LAVLLSGVHATIAGVLAALAI), 248-268 (PWVAFAIVPLFGFANAGVSFA), 270-290 (IGAEQLLAPLPLGIAAGLFLG), 321-341 (GVALLCGIGFTMSLFIGGLAF), and 349-369 (EVKIGVLGGSILSAIAGYALL).

It belongs to the NhaA Na(+)/H(+) (TC 2.A.33) antiporter family.

It is found in the cell inner membrane. It catalyses the reaction Na(+)(in) + 2 H(+)(out) = Na(+)(out) + 2 H(+)(in). In terms of biological role, na(+)/H(+) antiporter that extrudes sodium in exchange for external protons. The sequence is that of Na(+)/H(+) antiporter NhaA from Rhizorhabdus wittichii (strain DSM 6014 / CCUG 31198 / JCM 15750 / NBRC 105917 / EY 4224 / RW1) (Sphingomonas wittichii).